Here is an 80-residue protein sequence, read N- to C-terminus: uncharacterized protein (80 aa).

Residues 10-29 (FVAREYPLVVVPFIYFVLFL) traverse the membrane as a helical segment.

Its subcellular location is the membrane. This is an uncharacterized protein from Saccharomyces cerevisiae (strain ATCC 204508 / S288c) (Baker's yeast).